We begin with the raw amino-acid sequence, 1883 residues long: Chromodomain-helicase-DNA-binding protein 1 (1883 aa).

A compositionally biased stretch (polar residues) spans 1 to 14; that stretch reads MSQALNESANSIGS. Positions 1 to 293 are disordered; it reads MSQALNESAN…SEDEATDSED (293 aa). Residues 39–56 show a composition bias toward low complexity; it reads SGSDSDSDSSSGNSSDGR. A compositionally biased stretch (polar residues) spans 114–128; that stretch reads QRNQSINNANTSSSL. Residues 159-172 show a composition bias toward low complexity; the sequence is DSSANVSPTSSSSS. Acidic residues predominate over residues 213–226; sequence SDESDESEDSDDEV. Over residues 236–247 the composition is skewed to polar residues; it reads ATTSRSKLAQQQ. The segment covering 284 to 293 has biased composition (acidic residues); sequence SEDEATDSED. 2 consecutive Chromo domains span residues 318-414 and 439-501; these read ETIE…YWRR and NNVD…TPSR. Positions 540 to 710 constitute a Helicase ATP-binding domain; that stretch reads LHSWCKENSV…WALLHFIMPD (171 aa). 553 to 560 lines the ATP pocket; the sequence is DEMGLGKT. Positions 661-664 match the DEAH box motif; the sequence is DEAH. A Helicase C-terminal domain is found at 840-991; it reads LLDKLLCRLK…HLVIQRMDTT (152 aa). 5 disordered regions span residues 1074-1185, 1246-1265, 1390-1491, 1599-1829, and 1848-1883; these read FEEE…MKEK, HKEE…AKQR, TKGG…MHFT, KAGG…PYSS, and PPPS…RTQT. Over residues 1091–1103 the composition is skewed to acidic residues; sequence GEEDDSKDWDDII. Over residues 1106–1121 the composition is skewed to basic and acidic residues; it reads GFRKAIDDQERAKEME. The span at 1393 to 1402 shows a compositional bias: basic residues; it reads GQRRQRRPRA. Over residues 1437-1451 the composition is skewed to polar residues; that stretch reads AESSNSQVDPSTASP. A compositionally biased stretch (basic residues) spans 1466–1476; it reads KAKKSKARSKK. The interval 1505-1606 is CHD1 helical C-terminal domain (CHCT); that stretch reads LDPSIFNECK…KQKAGGDGEA (102 aa). Residues 1600–1612 show a composition bias toward basic and acidic residues; sequence AGGDGEAKGKDKG. The span at 1613-1622 shows a compositional bias: low complexity; sequence SSGSPAKSKP. The span at 1627–1638 shows a compositional bias: basic and acidic residues; that stretch reads TEEKEKERDRSG. Positions 1724-1738 are enriched in gly residues; that stretch reads YYGGSGPPMGSGSYE. The segment covering 1742–1755 has biased composition (polar residues); the sequence is NSRRQGPTSPSTPR. Basic and acidic residues-rich tracts occupy residues 1773–1794, 1805–1817, and 1868–1883; these read EMER…RYDG, YHRE…EKRR, and YPAD…RTQT.

Belongs to the SNF2/RAD54 helicase family. Monomer. Component of the SAGA complex. Interacts with SSRP1.

The protein localises to the nucleus. It localises to the chromosome. The catalysed reaction is ATP + H2O = ADP + phosphate + H(+). Functionally, ATP-dependent chromatin-remodeling factor which functions as substrate recognition component of the transcription regulatory histone acetylation (HAT) complex SAGA. Regulates polymerase II transcription. Also required for efficient transcription by RNA polymerase I, and more specifically the polymerase I transcription termination step. Regulates negatively DNA replication. Not only involved in transcription-related chromatin remodeling, but also required to maintain a specific chromatin configuration across the genome. Involved in assembly of active chromatin. Required for maintaining open chromatin and pluripotency in embryonic stem cells and is important for wing development and fertility. Is essential for the incorporation of histone H3.3 and assembly of paternal chromatin. Required for replication-independent nucleosome assembly in the decondensing male pronucleus. The chain is Chromodomain-helicase-DNA-binding protein 1 (Chd1) from Drosophila melanogaster (Fruit fly).